The following is a 532-amino-acid chain: Flavin-containing monooxygenase 1 (532 aa).

Residues 1 to 510 are Lumenal-facing; it reads MVKRVAIVGA…TRTVQETPST (510 aa). FAD contacts are provided by residues 9–13, glutamate 32, 40–41, and 61–62; these read GAGVS, LW, and NS. NADP(+) is bound by residues 60 to 61 and 195 to 198; these read SN and SGTD. A helical membrane pass occupies residues 511 to 531; sequence FETLLKLFSFLALLVAVFFIF. Leucine 532 is a topological domain (cytoplasmic).

It belongs to the FMO family. FAD is required as a cofactor. As to expression, expressed in liver, lung and kidney and to a lesser extent in the heart and brain.

The protein resides in the endoplasmic reticulum membrane. The catalysed reaction is hypotaurine + NADPH + O2 + H(+) = taurine + NADP(+) + H2O. It carries out the reaction hypotaurine + NADH + O2 + H(+) = taurine + NAD(+) + H2O. The enzyme catalyses trimethylamine + NADPH + O2 = trimethylamine N-oxide + NADP(+) + H2O. It catalyses the reaction N,N-dimethylaniline + NADPH + O2 + H(+) = N,N-dimethylaniline N-oxide + NADP(+) + H2O. In terms of biological role, broad spectrum monooxygenase that catalyzes the oxygenation of a wide variety of nitrogen- and sulfur-containing compounds including xenobiotics. Catalyzes the S-oxygenation of hypotaurine to produce taurine, an organic osmolyte involved in cell volume regulation as well as a variety of cytoprotective and developmental processes. In vitro, catalyzes the N-oxygenation of trimethylamine (TMA) to produce trimethylamine N-oxide (TMAO) and could therefore participate to the detoxification of this compound that is generated by the action of gut microbiota from dietary precursors such as choline, choline containing compounds, betaine or L-carnitine. The protein is Flavin-containing monooxygenase 1 of Rattus norvegicus (Rat).